A 291-amino-acid chain; its full sequence is ATP synthase gamma chain (291 aa).

This sequence belongs to the ATPase gamma chain family. In terms of assembly, F-type ATPases have 2 components, CF(1) - the catalytic core - and CF(0) - the membrane proton channel. CF(1) has five subunits: alpha(3), beta(3), gamma(1), delta(1), epsilon(1). CF(0) has three main subunits: a, b and c.

The protein resides in the cell inner membrane. Its function is as follows. Produces ATP from ADP in the presence of a proton gradient across the membrane. The gamma chain is believed to be important in regulating ATPase activity and the flow of protons through the CF(0) complex. In Cupriavidus pinatubonensis (strain JMP 134 / LMG 1197) (Cupriavidus necator (strain JMP 134)), this protein is ATP synthase gamma chain.